The sequence spans 156 residues: Ribosomal RNA large subunit methyltransferase H (156 aa).

Residues Leu73, Gly104, and 123–128 (LSSLTL) each bind S-adenosyl-L-methionine.

It belongs to the RNA methyltransferase RlmH family. In terms of assembly, homodimer.

It is found in the cytoplasm. It carries out the reaction pseudouridine(1915) in 23S rRNA + S-adenosyl-L-methionine = N(3)-methylpseudouridine(1915) in 23S rRNA + S-adenosyl-L-homocysteine + H(+). In terms of biological role, specifically methylates the pseudouridine at position 1915 (m3Psi1915) in 23S rRNA. The chain is Ribosomal RNA large subunit methyltransferase H from Bordetella bronchiseptica (strain ATCC BAA-588 / NCTC 13252 / RB50) (Alcaligenes bronchisepticus).